A 27-amino-acid polypeptide reads, in one-letter code: Protamine-B (27 aa).

The tract at residues 1–27 (ARRRRRSSRPQRRRRRRRHGRRRRGRR) is disordered.

In terms of tissue distribution, testis.

The protein resides in the nucleus. It localises to the chromosome. Protamines substitute for histones in the chromatin of sperm during the haploid phase of spermatogenesis. They compact sperm DNA into a highly condensed, stable and inactive complex. The polypeptide is Protamine-B (Acipenser stellatus (Sevruga)).